The primary structure comprises 93 residues: Phosphoribosyl-ATP pyrophosphatase (93 aa).

The protein belongs to the PRA-PH family.

It localises to the cytoplasm. It carries out the reaction 1-(5-phospho-beta-D-ribosyl)-ATP + H2O = 1-(5-phospho-beta-D-ribosyl)-5'-AMP + diphosphate + H(+). It functions in the pathway amino-acid biosynthesis; L-histidine biosynthesis; L-histidine from 5-phospho-alpha-D-ribose 1-diphosphate: step 2/9. This chain is Phosphoribosyl-ATP pyrophosphatase, found in Metallosphaera sedula (strain ATCC 51363 / DSM 5348 / JCM 9185 / NBRC 15509 / TH2).